The sequence spans 183 residues: MRQRGFTVLEMMLVVLLMGSAASLVIMSFPAMQQDTAERQLQRFQAQLEFAMDSGMQNDRLLGIQIRPNGWQFQVLQSQAAETRSSVAHSDRWQGYVWQIWQPRQAALGGQVPDNQPLTLRLPPPQEWPPTAEPAADPDILLLPGGEITPFTLIFGEKDDRSEVWLRVDESGAIATSAKGGAP.

Residues 1-5 (MRQRG) constitute a propeptide, leader sequence. The residue at position 6 (Phe6) is an N-methylphenylalanine. A helical membrane pass occupies residues 6–26 (FTVLEMMLVVLLMGSAASLVI).

Type II secretion is composed of four main components: the outer membrane complex, the inner membrane complex, the cytoplasmic secretion ATPase and the periplasm-spanning pseudopilus. Interacts with core component PulG. Interacts with PulM. Cleaved by prepilin peptidase. Post-translationally, methylated by prepilin peptidase at the amino group of the N-terminal phenylalanine once the leader sequence is cleaved by prepilin peptidase.

The protein localises to the cell inner membrane. In terms of biological role, component of the type II secretion system required for the energy-dependent secretion of extracellular factors such as proteases and toxins from the periplasm. Part of the pseudopilus tip complex that is critical for the recognition and binding of secretion substrates. This is Type II secretion system protein H (pulH) from Klebsiella michiganensis (strain ATCC 8724 / DSM 4798 / JCM 20051 / NBRC 3318 / NRRL B-199 / KCTC 1686 / BUCSAV 143 / CCM 1901).